The following is a 280-amino-acid chain: MSLQFAKYHGLGNDFILVDNRESGEPRLTPEQAVQVCDRNFGVGADGVIFALPGSGDSDYVMRIFNSDGSEPEMCGNGIRCLAKFLSELDGGAQSRYRIATGAGLIVPTLTETGLVTVDMGPAYLKPVEIPTTLTGTGDRVVEADLEVGDRPWKVTTVSMGNPHCITFVEDVAAVPLAEIGPLFEHHPVFPQRTNTEFVEVVRPDYLKMRVWERGAGATLACGTGACATLVAAVLTGRSDRQATVELPGGPLQIEWREDGHLFMTGPAVKVFSGSMELAA.

Substrate contacts are provided by Asn13 and Asn66. The active-site Proton donor is the Cys75. Residues 76-77, Asn162, Asn195, and 213-214 contribute to the substrate site; these read GN and ER. Cys222 serves as the catalytic Proton acceptor. 223 to 224 is a substrate binding site; sequence GT.

Belongs to the diaminopimelate epimerase family. In terms of assembly, homodimer.

The protein resides in the cytoplasm. The enzyme catalyses (2S,6S)-2,6-diaminopimelate = meso-2,6-diaminopimelate. It participates in amino-acid biosynthesis; L-lysine biosynthesis via DAP pathway; DL-2,6-diaminopimelate from LL-2,6-diaminopimelate: step 1/1. In terms of biological role, catalyzes the stereoinversion of LL-2,6-diaminopimelate (L,L-DAP) to meso-diaminopimelate (meso-DAP), a precursor of L-lysine and an essential component of the bacterial peptidoglycan. The polypeptide is Diaminopimelate epimerase (Synechococcus elongatus (strain ATCC 33912 / PCC 7942 / FACHB-805) (Anacystis nidulans R2)).